A 1183-amino-acid chain; its full sequence is Phospholipid-transporting ATPase FetA (1183 aa).

3 helical membrane-spanning segments follow: residues 96–116 (ISSLAWYTTVIPLIVVLSITG), 299–319 (VLVVWIFMFLGGMCFLLSIGH), and 348–368 (ALIFWSYFIVLNTMVPISLYV). Residue Asp416 is the 4-aspartylphosphate intermediate of the active site. ATP contacts are provided by Asp416, Lys417, Thr418, Glu519, Phe560, Lys583, Arg617, Thr697, Gly698, Asp699, Arg812, and Lys818. Asp416 contacts Mg(2+). Thr418 contacts Mg(2+). Asp838 serves as a coordination point for Mg(2+). Positions 841 and 842 each coordinate ATP. Asp842 serves as a coordination point for Mg(2+). Transmembrane regions (helical) follow at residues 904-924 (FAFTLVHFWYAFFNGFSAQTV), 927-947 (IWFITFYNLIYTSLPVLGLSL), 981-1001 (CLLHGIYNSFVLFFVPMGTVF), 1014-1034 (FQSFSLLVQTTLIGVMTMQIA), 1049-1069 (WGSLGLYFCILILLCSDGLCL), and 1090-1110 (IWLCLILSTILCMIPLIGYNF).

The protein belongs to the cation transport ATPase (P-type) (TC 3.A.3) family. Type IV subfamily. The cofactor is Mg(2+). In terms of tissue distribution, highly expressed in testis.

The protein localises to the cytoplasmic vesicle. It is found in the secretory vesicle. The protein resides in the acrosome membrane. The enzyme catalyses ATP + H2O + phospholipidSide 1 = ADP + phosphate + phospholipidSide 2.. Functionally, P4-ATPase flippase which catalyzes the hydrolysis of ATP coupled to the transport of aminophospholipids from the outer to the inner leaflet of various membranes and ensures the maintenance of asymmetric distribution of phospholipids. Phospholipid translocation also seems to be implicated in vesicle formation and in uptake of lipid signaling molecules. May play a role in phospholid transport across membranes and in acrosome formation. The sequence is that of Phospholipid-transporting ATPase FetA (Atp8b5) from Mus musculus (Mouse).